The sequence spans 234 residues: MLTYETWEENDVSFSEEDETKGALSVLSWAYKEYENEIVYACSFGVEGMVLLHLINQVNPSAKVVFLDTNVHFQETYELIQKVRERFPSLNIIEKQPKLTLNEQAKLHGDKLWESNPNLCCKIRKILPLEESLANEKAWISGLRREQSETRKHTKFINQDHRFQSIKVCPLIHWTWKEVWRYVYKHSLPYNPLHDVGYPSIGCEKCTLPVGEGGDSRDGRWAGKVKTECGLHYQ.

[4Fe-4S] cluster is bound by residues Cys120, Cys121, Cys203, and Cys206. Cys229 acts as the Nucleophile; cysteine thiosulfonate intermediate in catalysis.

Belongs to the PAPS reductase family. CysH subfamily. [4Fe-4S] cluster is required as a cofactor.

The protein resides in the cytoplasm. The enzyme catalyses [thioredoxin]-disulfide + sulfite + AMP + 2 H(+) = adenosine 5'-phosphosulfate + [thioredoxin]-dithiol. It functions in the pathway sulfur metabolism; hydrogen sulfide biosynthesis; sulfite from sulfate. Functionally, catalyzes the formation of sulfite from adenosine 5'-phosphosulfate (APS) using thioredoxin as an electron donor. The polypeptide is Adenosine 5'-phosphosulfate reductase (Bacillus cereus (strain 03BB102)).